The sequence spans 305 residues: Serine/threonine-protein phosphatase PP1-delta (305 aa).

4 residues coordinate Mn(2+): Asp-62, His-64, Asp-90, and Asn-122. His-123 (proton donor) is an active-site residue. Mn(2+)-binding residues include His-172 and His-247.

This sequence belongs to the PPP phosphatase family. Expressed in male germline including spermatocytes, spermatids and spermatozoa.

The protein localises to the chromosome. It is found in the cell projection. It localises to the pseudopodium. Its subcellular location is the cytoplasm. It catalyses the reaction O-phospho-L-seryl-[protein] + H2O = L-seryl-[protein] + phosphate. The enzyme catalyses O-phospho-L-threonyl-[protein] + H2O = L-threonyl-[protein] + phosphate. Functionally, probable phosphatase which plays a redundant role with gsp-4 in spermatogenesis by regulating sister chromatid segregation during meiosis. In addition, involved in sperm motility by controlling the dynamic disassembly of major sperm proteins (MSP) in the spermatozoan pseudopodium. The polypeptide is Serine/threonine-protein phosphatase PP1-delta (Caenorhabditis elegans).